A 204-amino-acid polypeptide reads, in one-letter code: ATP synthase subunit b 2 (204 aa).

The segment at 8–28 (AQSSTTEGAEAHDAAAAGEVH) is disordered. A helical membrane pass occupies residues 56–76 (LLWLAITFGLFYLLMSKVIIP).

Belongs to the ATPase B chain family. In terms of assembly, F-type ATPases have 2 components, F(1) - the catalytic core - and F(0) - the membrane proton channel. F(1) has five subunits: alpha(3), beta(3), gamma(1), delta(1), epsilon(1). F(0) has three main subunits: a(1), b(2) and c(10-14). The alpha and beta chains form an alternating ring which encloses part of the gamma chain. F(1) is attached to F(0) by a central stalk formed by the gamma and epsilon chains, while a peripheral stalk is formed by the delta and b chains.

It localises to the cell inner membrane. F(1)F(0) ATP synthase produces ATP from ADP in the presence of a proton or sodium gradient. F-type ATPases consist of two structural domains, F(1) containing the extramembraneous catalytic core and F(0) containing the membrane proton channel, linked together by a central stalk and a peripheral stalk. During catalysis, ATP synthesis in the catalytic domain of F(1) is coupled via a rotary mechanism of the central stalk subunits to proton translocation. In terms of biological role, component of the F(0) channel, it forms part of the peripheral stalk, linking F(1) to F(0). The b'-subunit is a diverged and duplicated form of b found in plants and photosynthetic bacteria. The polypeptide is ATP synthase subunit b 2 (atpF2) (Rhizobium meliloti (strain 1021) (Ensifer meliloti)).